An 862-amino-acid chain; its full sequence is Axin-1 (862 aa).

A disordered region spans residues Met1–Pro78. The short motif at Ala20–Glu29 is the Tankyrase-binding motif element. 2 positions are modified to phosphoserine; by CK1: Ser75 and Ser77. The RGS domain maps to Ser88–Thr211. An interaction with TP53 region spans residues Glu209–Ser338. Disordered regions lie at residues Ser215–Gly289 and Thr316–Pro344. Ser217 bears the Phosphoserine; by CK1 mark. Residues Asn242–Gly258 show a composition bias toward acidic residues. Over residues Ser325–Ser339 the composition is skewed to low complexity. Residues Ile348–Gly433 form an interaction with GSK3B region. Residues Arg353 to Glu411 form an interaction with SIAH1 and SIAH2 region. Residues Leu413–Ala441 are disordered. Pro residues predominate over residues Ser429–Ala441. The interval Pro434–Met502 is interaction with CTNNB1. Ser469 carries the post-translational modification Phosphoserine; by CK1. Residues Arg480 to Ala500 form a disordered region. A Phosphothreonine; by GSK3-beta modification is found at Thr481. Residues Ser486, Ser493, and Ser511 each carry the phosphoserine modification. An interaction with RNF111 region spans residues Gly507–Ser757. Positions His531–Ala544 are enriched in basic residues. 2 disordered regions span residues His531 to Asn629 and Lys641 to Leu679. Positions Arg545–Arg556 are enriched in basic and acidic residues. Positions Ser575–Phe789 are interaction with PPP2CA. Position 581 is a phosphoserine (Ser581). The interval Pro677 to Val752 is interaction with HIPK2. The DIX domain maps to Cys780 to Asp862. Glycyl lysine isopeptide (Lys-Gly) (interchain with G-Cter in SUMO) cross-links involve residues Lys857 and Lys860.

In terms of assembly, homodimer. Interacts with ZBED3; the interaction is direct, enhanced by protein kinase GSK3B and casein kinase CSNK1E activities and decreases GSK3B-induced beta-catenin serine and threonine phosphorylations. Component of the beta-catenin destruction complex, containing at least, CTNNB1, an axin and GSK3B, that regulates CTNNB1 protein levels through phosphorylation and ubiquitination. Interacts with CTNNB1 (via the armadillo repeats 2-7). Interacts with GSK3B; the interaction hyperphosphorylates CTNNB1 leading to its ubiquitination and destruction. Component of the AXIN1-HIPK2-TP53 complex. Interacts directly in the complex with TP53 and HIPK2. Interacts with DAXX; the interaction stimulates the interaction of DAXX with TP53, stimulates 'Ser-46' phosphorylation of TP53 and induces cell death on UV irradiation. Also binds APC, SMAD6, SMAD7 and RNF111. Interacts with DIXDC1; prevents interaction with MAP3K1. Interacts with MAP3K4. Interacts with ANKRD6 and AIDA. Interacts with MDFI; the interaction decreases AXIN1-mediated JUN N-terminal kinase (JNK) activation. Interacts with MDFIC; the interaction inhibits beta-cateninin-mediated signaling and AXIN1-mediated JUN N-terminal kinase (JNK) activation. Interacts with LRP5 (via its phosphorylated PPPSP motifs); the interaction is stimulated by WNT1 and GSK3B and activates beta-catenin signaling. Interacts (via the C-terminal) with PPP1CA; the interaction dephosphorylates AXIN1 and regulates interaction with GSK3B. Interacts with PPP2CA; the interaction dephosphorylates AXIN1. Interacts with MACF1. Found in a complex composed of MACF1, APC, AXIN1, CTNNB1 and GSK3B. Interacts with TNKS. Interacts with DAB2; the interaction is mutually exclusive with the AXIN1:PPP1CA interaction. Interacts with WDR26. Interacts with GID8. Interacts with SIAH1 and SIAH2; both probably catalyze AXIN1 ubiquitination and subsequent proteasome-mediated ubiquitin-dependent degradation. Interaction with GSK3B and AXIN1 is competitive. Phosphorylation and dephosphorylation of AXIN1 regulates assembly and function of the beta-catenin complex. Phosphorylated by CK1 and GSK3B. Dephosphorylated by PPP1CA and PPP2CA. Phosphorylation by CK1 enhances binding of GSK3B to AXIN1. Post-translationally, ADP-ribosylated by tankyrase TNKS and TNKS2. Poly-ADP-ribosylated protein is recognized by RNF146, followed by ubiquitination at 'Lys-48' and subsequent activation of the Wnt signaling pathway. In terms of processing, ubiquitinated by RNF146 when poly-ADP-ribosylated, leading to its degradation and subsequent activation of the Wnt signaling pathway. Sumoylation at Lys-857 and Lys-860 prevents ubiquitination and degradation. Sumoylation is required for AXIN1-mediated JNK activation. Deubiquitinated by USP34, deubiquitinated downstream of beta-catenin stabilization step: deubiquitination is important for nuclear accumulation during Wnt signaling to positively regulate beta-catenin (CTNBB1)-mediated transcription. Ubiquitination by SIAH1 and SIAH2 induces its proteasomal degradation as part of the activation of the Wnt signaling pathway. In terms of tissue distribution, ubiquitously expressed.

It is found in the cytoplasm. It localises to the nucleus. The protein localises to the membrane. Its subcellular location is the cell membrane. Functionally, component of the beta-catenin destruction complex required for regulating CTNNB1 levels through phosphorylation and ubiquitination, and modulating Wnt-signaling. Controls dorsoventral patterning via two opposing effects; down-regulates CTNNB1 to inhibit the Wnt signaling pathway and ventralize embryos, but also dorsalizes embryos by activating a Wnt-independent JNK signaling pathway. In Wnt signaling, probably facilitates the phosphorylation of CTNNB1 and APC by GSK3B. Likely to function as a tumor suppressor. Enhances TGF-beta signaling by recruiting the RNF111 E3 ubiquitin ligase and promoting the degradation of inhibitory SMAD7. Also a component of the AXIN1-HIPK2-TP53 complex which controls cell growth, apoptosis and development. Facilitates the phosphorylation of TP53 by HIPK2 upon ultraviolet irradiation. This is Axin-1 (AXIN1) from Homo sapiens (Human).